A 354-amino-acid polypeptide reads, in one-letter code: MTELKNDRYLRALLRQPVDVTPVWMMRQAGRYLPEYKATRAQAGDFMSLCKNAELACEVTLQPLRRYPLDAAILFSDILTIPDAMGLGLYFEAGEGPRFTAPVTCKADVEKLPIPDPEGELGYVMNAVRTIRRELKGEVPLIGFSGSPWTLATYMVEGGSSKAFTVIKKMMYADPQALHLLLDKLAKSVTLYLNAQIKAGAQSVMIFDTWGGVLTGRDYQQFSLYYMHKIVDGLLRENDGRCVPVTLFTKGGGQWLEAMAETGCDALGLDWTTDIADARRRVGHKVALQGNMDPSMLYAPPARIEDEVATILAGFGQGEGHVFNLGHGIHQDVPPEHAGAFVEAVHRLSAQYHN.

Substrate-binding positions include 27–31, Asp-77, Tyr-154, Thr-209, and His-327; that span reads RQAGR.

It belongs to the uroporphyrinogen decarboxylase family. Homodimer.

Its subcellular location is the cytoplasm. The enzyme catalyses uroporphyrinogen III + 4 H(+) = coproporphyrinogen III + 4 CO2. Its pathway is porphyrin-containing compound metabolism; protoporphyrin-IX biosynthesis; coproporphyrinogen-III from 5-aminolevulinate: step 4/4. Functionally, catalyzes the decarboxylation of four acetate groups of uroporphyrinogen-III to yield coproporphyrinogen-III. This is Uroporphyrinogen decarboxylase from Salmonella dublin (strain CT_02021853).